Reading from the N-terminus, the 353-residue chain is NADH-ubiquinone oxidoreductase chain 2 (353 aa).

8 helical membrane-spanning segments follow: residues 4-24 (SVVL…LSSH), 60-80 (FLVQ…QLWL), 96-116 (IVLT…FWFP), 139-159 (FIIL…TLGC), 198-218 (IYVG…VFLI), 241-261 (GNVL…TGFL), 274-294 (NLLV…FFYL), and 330-350 (VLLS…PALW).

It belongs to the complex I subunit 2 family.

The protein resides in the mitochondrion inner membrane. The catalysed reaction is a ubiquinone + NADH + 5 H(+)(in) = a ubiquinol + NAD(+) + 4 H(+)(out). Its function is as follows. Core subunit of the mitochondrial membrane respiratory chain NADH dehydrogenase (Complex I) that is believed to belong to the minimal assembly required for catalysis. Complex I functions in the transfer of electrons from NADH to the respiratory chain. The immediate electron acceptor for the enzyme is believed to be ubiquinone. This is NADH-ubiquinone oxidoreductase chain 2 (ND2) from Pisaster ochraceus (Ochre sea star).